The chain runs to 536 residues: Phosphoenolpyruvate carboxykinase (ATP) (536 aa).

3 residues coordinate substrate: Arg61, Tyr195, and Lys201. ATP-binding positions include Lys201, His220, and 236–244 (GLSGTGKTT). Mn(2+) is bound by residues Lys201 and His220. Asp257 is a Mn(2+) binding site. Positions 285, 323, and 448 each coordinate ATP. Position 323 (Arg323) interacts with substrate.

Belongs to the phosphoenolpyruvate carboxykinase (ATP) family. The cofactor is Mn(2+).

The protein localises to the cytoplasm. The enzyme catalyses oxaloacetate + ATP = phosphoenolpyruvate + ADP + CO2. Its pathway is carbohydrate biosynthesis; gluconeogenesis. Functionally, involved in the gluconeogenesis. Catalyzes the conversion of oxaloacetate (OAA) to phosphoenolpyruvate (PEP) through direct phosphoryl transfer between the nucleoside triphosphate and OAA. The polypeptide is Phosphoenolpyruvate carboxykinase (ATP) (Methylobacterium sp. (strain 4-46)).